The primary structure comprises 292 residues: Elongation factor Ts (292 aa).

Residues 82–85 (TDFV) form an involved in Mg(2+) ion dislocation from EF-Tu region.

It belongs to the EF-Ts family.

It is found in the cytoplasm. Its function is as follows. Associates with the EF-Tu.GDP complex and induces the exchange of GDP to GTP. It remains bound to the aminoacyl-tRNA.EF-Tu.GTP complex up to the GTP hydrolysis stage on the ribosome. This chain is Elongation factor Ts, found in Bordetella avium (strain 197N).